A 282-amino-acid polypeptide reads, in one-letter code: MAKNKKLFEYLSQHAETISSTWYETIEETDPNSIYASTDPVVIHNLKSQNLAFNYKINRIFIDDEDVYLPILKEWAFEVTQDQEHLKTPIHYIIREFVRVRDLYVSYVKEFVHLNQNTVKSEEAEDLYHALIKAFDLVIHIFIEEMYKNTSLQLQAQKDMITELSAPVIVLFHSVGLLPLIGDIDTVRAKLIMENTLHQCAKKKVTQLYIDLSGVAVIDTMVAHQLFSLIEALRLIGVSSTLSGIRPEIAQTAVQLGLSFEGISLRSTLASAIASDLKLKKV.

Residues serine 165 and serine 174 each carry the phosphoserine modification. An STAS domain is found at 165–276 (SAPVIVLFHS…STLASAIASD (112 aa)). Threonine 186 is modified (phosphothreonine).

As to quaternary structure, probably present in the stressosome with RsbRA, RsbRB, RsbRD and RsbS. In terms of processing, phosphorylated by RsbT.

In terms of biological role, one of 4 functionally non-identical RsbR paralogs, it functions in the environmental signaling branch of the general stress response. Functionally, negative regulator of sigma-B activity. Non-phosphorylated RsbS binds to RsbT, preventing its association with RsbU. Requires any one of RsbRA, RsbRB, RsbRC or RsbRD to sequester RsbT. When RsbS and the RsbR paralog(s) are phosphorylated, they release RsbT, which can then bind and activate RsbU. The chain is RsbT co-antagonist protein RsbRC (rsbRC) from Bacillus subtilis (strain 168).